The primary structure comprises 227 residues: Cytidylate kinase (227 aa).

12–20 provides a ligand contact to ATP; the sequence is GPSGAGKGT.

It belongs to the cytidylate kinase family. Type 1 subfamily.

It is found in the cytoplasm. The enzyme catalyses CMP + ATP = CDP + ADP. It carries out the reaction dCMP + ATP = dCDP + ADP. In Salmonella arizonae (strain ATCC BAA-731 / CDC346-86 / RSK2980), this protein is Cytidylate kinase.